Reading from the N-terminus, the 285-residue chain is Probable fructose-bisphosphate aldolase (285 aa).

Position 50 (Ser50) interacts with D-glyceraldehyde 3-phosphate. Asp85 functions as the Proton donor in the catalytic mechanism. Residues His86, Asp107, Glu137, and His181 each contribute to the Zn(2+) site. Residue Gly182 coordinates dihydroxyacetone phosphate. His209 is a Zn(2+) binding site. Dihydroxyacetone phosphate-binding positions include 210–212 (GGT) and 231–234 (NVNT). Phosphothreonine occurs at positions 212 and 234.

This sequence belongs to the class II fructose-bisphosphate aldolase family. It depends on Zn(2+) as a cofactor. Phosphorylated during sporulation.

The catalysed reaction is beta-D-fructose 1,6-bisphosphate = D-glyceraldehyde 3-phosphate + dihydroxyacetone phosphate. It participates in carbohydrate degradation; glycolysis; D-glyceraldehyde 3-phosphate and glycerone phosphate from D-glucose: step 4/4. Functionally, catalyzes the aldol condensation of dihydroxyacetone phosphate (DHAP or glycerone-phosphate) with glyceraldehyde 3-phosphate (G3P) to form fructose 1,6-bisphosphate (FBP) in gluconeogenesis and the reverse reaction in glycolysis. This chain is Probable fructose-bisphosphate aldolase (fbaA), found in Bacillus subtilis (strain 168).